A 213-amino-acid chain; its full sequence is Uridine kinase (213 aa).

Position 14 to 21 (14 to 21 (GASASGKS)) interacts with ATP.

This sequence belongs to the uridine kinase family.

Its subcellular location is the cytoplasm. The catalysed reaction is uridine + ATP = UMP + ADP + H(+). It catalyses the reaction cytidine + ATP = CMP + ADP + H(+). The protein operates within pyrimidine metabolism; CTP biosynthesis via salvage pathway; CTP from cytidine: step 1/3. It functions in the pathway pyrimidine metabolism; UMP biosynthesis via salvage pathway; UMP from uridine: step 1/1. This Vibrio campbellii (strain ATCC BAA-1116) protein is Uridine kinase.